The primary structure comprises 92 residues: MKILLAIALMLSTVMWVSTQQPQRVHTYCGRHLARTLADLCWEAGVDKRSGAQFASYGSAWLMPYSEGRGKRGIVDECCLRPCSVDVLLSYC.

A signal peptide spans 1-19; it reads MKILLAIALMLSTVMWVST. The residue at position 20 (Gln-20) is a Pyrrolidone carboxylic acid. Intrachain disulfides connect Cys-29-Cys-79, Cys-41-Cys-92, and Cys-78-Cys-83. Positions 50–70 are cleaved as a propeptide — c peptide like; that stretch reads SGAQFASYGSAWLMPYSEGRG.

The protein belongs to the insulin family. In terms of assembly, heterodimer of a B chain and an A chain linked by two disulfide bonds.

The protein localises to the secreted. Brain peptide responsible for activation of prothoracic glands to produce ecdysone in insects. This chain is Bombyxin A-1 (BBXA1), found in Bombyx mori (Silk moth).